Reading from the N-terminus, the 265-residue chain is H-2 class II histocompatibility antigen, A beta chain (265 aa).

Positions Met1–Gly27 are cleaved as a signal peptide. Residues Gly28–Leu122 are beta-1. Residues Gly28–Lys226 are Extracellular-facing. Cystine bridges form between Cys42–Cys106 and Cys145–Cys201. A glycan (N-linked (GlcNAc...) asparagine) is linked at Asn46. A beta-2 region spans residues Glu123–Trp216. The region spanning Pro125–Thr213 is the Ig-like C1-type domain. Positions Arg217–Lys226 are connecting peptide. A helical membrane pass occupies residues Met227–Ile247. The Cytoplasmic segment spans residues Arg248–Gln265.

The protein belongs to the MHC class II family. Ubiquitinated in immature dendritic cells leading to down-regulation of MHC class II.

The protein localises to the membrane. In Mus musculus (Mouse), this protein is H-2 class II histocompatibility antigen, A beta chain (H2-Ab1).